A 251-amino-acid chain; its full sequence is V-set and transmembrane domain-containing protein 2B (251 aa).

The N-terminal stretch at methionine 1 to alanine 25 is a signal peptide. An Ig-like V-type domain is found at threonine 26–alanine 142. The Extracellular segment spans residues threonine 26–proline 226. Cysteine 46 and cysteine 125 are joined by a disulfide. Residues alanine 157–alanine 213 are disordered. 2 stretches are compositionally biased toward low complexity: residues serine 166–arginine 177 and alanine 195–alanine 213. Residues isoleucine 227–leucine 247 traverse the membrane as a helical segment. The Cytoplasmic segment spans residues leucine 248–histidine 251.

It localises to the membrane. The chain is V-set and transmembrane domain-containing protein 2B (vstm2b) from Xenopus tropicalis (Western clawed frog).